The following is a 618-amino-acid chain: DNA mismatch repair protein MutL (618 aa).

It belongs to the DNA mismatch repair MutL/HexB family.

This protein is involved in the repair of mismatches in DNA. It is required for dam-dependent methyl-directed DNA mismatch repair. May act as a 'molecular matchmaker', a protein that promotes the formation of a stable complex between two or more DNA-binding proteins in an ATP-dependent manner without itself being part of a final effector complex. The polypeptide is DNA mismatch repair protein MutL (Bradyrhizobium sp. (strain BTAi1 / ATCC BAA-1182)).